The chain runs to 499 residues: Xylulose kinase (499 aa).

Residue 81-82 participates in substrate binding; sequence MH. Aspartate 239 serves as the catalytic Proton acceptor.

This sequence belongs to the FGGY kinase family.

It catalyses the reaction D-xylulose + ATP = D-xylulose 5-phosphate + ADP + H(+). Catalyzes the phosphorylation of D-xylulose to D-xylulose 5-phosphate. This chain is Xylulose kinase, found in Bacillus subtilis (strain 168).